Reading from the N-terminus, the 910-residue chain is Putative disease resistance protein At1g58400 (910 aa).

Residues 15-57 are a coiled coil; that stretch reads DRLTQEYEQFQGVEDRIAELKSNLNLLKSFLKDAEAKKNTSQM. The region spanning 148–460 is the NB-ARC domain; sequence REREMRQTFS…AEGILEPRHY (313 aa). 191 to 198 is a binding site for ATP; sequence GMGGLGKT. LRR repeat units lie at residues 580-604 and 605-628; these read LELL…GIGK and LIHL…LGNL.

The protein belongs to the disease resistance NB-LRR family.

Functionally, potential disease resistance protein. This is Putative disease resistance protein At1g58400 from Arabidopsis thaliana (Mouse-ear cress).